The primary structure comprises 138 residues: Integration host factor subunit beta (138 aa).

The segment covering Lys-81–Gly-98 has biased composition (basic and acidic residues). Residues Lys-81 to Arg-138 form a disordered region.

Belongs to the bacterial histone-like protein family. In terms of assembly, heterodimer of an alpha and a beta chain.

Its function is as follows. This protein is one of the two subunits of integration host factor, a specific DNA-binding protein that functions in genetic recombination as well as in transcriptional and translational control. The sequence is that of Integration host factor subunit beta from Ralstonia nicotianae (strain ATCC BAA-1114 / GMI1000) (Ralstonia solanacearum).